A 56-amino-acid chain; its full sequence is uncharacterized protein (56 aa).

The helical transmembrane segment at 30 to 52 (IKIGIICVIITWAIFSINHHHTI) threads the bilayer.

The protein resides in the membrane. This is an uncharacterized protein from Dictyostelium discoideum (Social amoeba).